The chain runs to 893 residues: Phosphatidate phosphatase LPIN2 (893 aa).

An N-LIP region spans residues 1-108; the sequence is MNYVGQLAGQ…LPAYLATSPI (108 aa). Residue Ser-106 is modified to Phosphoserine. Residues 122–216 are disordered; sequence LVKSSGNERP…EDYKEPSLFH (95 aa). The span at 123-151 shows a compositional bias: polar residues; it reads VKSSGNERPAQSSDVSHTLESEAVFTQSS. Residues 152–162 show a composition bias toward basic residues; sequence VKKKKRRRKKC. A Nuclear localization signal motif is present at residues 153–158; the sequence is KKKKRR. Residues Ser-174, Ser-186, and Ser-187 each carry the phosphoserine modification. Residues 204 to 213 are compositionally biased toward basic and acidic residues; sequence LKEEDYKEPS. Residues Ser-243 and Ser-303 each carry the phosphoserine modification. 2 disordered regions span residues 357-400 and 417-456; these read LLDA…PDDI and FPKS…TECL. Residues 360–371 show a composition bias toward low complexity; the sequence is ADPVPSPSAEAP. Basic residues predominate over residues 384-393; it reads KKKGVHKRSQ. Over residues 423–445 the composition is skewed to polar residues; the sequence is DPGSRQWPESDTFSGSQSPQSVG. The residue at position 563 (Ser-563) is a Phosphoserine. A disordered region spans residues 568–611; the sequence is LPETKEGKSEVPPANDLPSNAEEPTSARPAENDTSSDEGSQELE. Residues 601-611 are compositionally biased toward acidic residues; sequence TSSDEGSQELE. Residues 632–834 form a C-LIP region; the sequence is YKKSLRLSSD…RIFTVNPKGE (203 aa). Residues 686-690 carry the DXDXT motif motif; the sequence is DIDGT. The LXXIL motif signature appears at 697-701; the sequence is LGQIL.

This sequence belongs to the lipin family. Mg(2+) is required as a cofactor. In terms of tissue distribution, expressed at high level in liver and to some extend in lung, kidney, placenta, spleen, thymus, lymph node, prostate, testes, small intestine, and colon. Expressed also in circulating red blood cells and site of lymphopoiesis.

The protein localises to the nucleus. It is found in the cytoplasm. The protein resides in the cytosol. Its subcellular location is the endoplasmic reticulum membrane. The catalysed reaction is a 1,2-diacyl-sn-glycero-3-phosphate + H2O = a 1,2-diacyl-sn-glycerol + phosphate. Inhibited by N-ethylmaleimide. Acts as a magnesium-dependent phosphatidate phosphatase enzyme which catalyzes the conversion of phosphatidic acid to diacylglycerol during triglyceride, phosphatidylcholine and phosphatidylethanolamine biosynthesis in the endoplasmic reticulum membrane. Plays important roles in controlling the metabolism of fatty acids at different levels. Also acts as a nuclear transcriptional coactivator for PPARGC1A to modulate lipid metabolism. This is Phosphatidate phosphatase LPIN2 from Mus musculus (Mouse).